The primary structure comprises 883 residues: Histidine--tRNA ligase, cytoplasmic (883 aa).

It belongs to the class-II aminoacyl-tRNA synthetase family.

Its subcellular location is the cytoplasm. It localises to the cytosol. It catalyses the reaction tRNA(His) + L-histidine + ATP = L-histidyl-tRNA(His) + AMP + diphosphate + H(+). This chain is Histidine--tRNA ligase, cytoplasmic, found in Arabidopsis thaliana (Mouse-ear cress).